The chain runs to 85 residues: UPF0386 protein Arad_1912 (85 aa).

This sequence belongs to the UPF0386 family.

The chain is UPF0386 protein Arad_1912 from Rhizobium rhizogenes (strain K84 / ATCC BAA-868) (Agrobacterium radiobacter).